A 397-amino-acid polypeptide reads, in one-letter code: Heterogeneous nuclear ribonucleoprotein K homolog (397 aa).

The interval 1 to 41 (MMIKVGAAINGTDSPKAMKREHDNDDGDRTGRHKRPKTDGF) is disordered. The segment covering 16 to 30 (KAMKREHDNDDGDRT) has biased composition (basic and acidic residues). 2 KH domains span residues 49–111 (KFEV…LKDV) and 124–189 (PCEV…IEEV). Residues 220 to 279 (GGFPGNMPAGGPPNNRGPAPQRGGQGPPGGPRSYGGAITQGGGQRSFEAGDFQQFRGGPG) are disordered. Residues 224 to 241 (GNMPAGGPPNNRGPAPQR) are compositionally biased toward low complexity. The region spanning 316-379 (VTTAQVTIPS…QQIHSAQYLL (64 aa)) is the KH 3 domain.

In terms of assembly, interacts with alg-1; the interaction is direct and may be strengthened through RNA-protein association. As to expression, expressed in gut, muscle, neuronal and hypodermal tissues. Highly expressed in the germline and oocytes.

It is found in the nucleus. The protein resides in the cytoplasm. Its function is as follows. RNA-binding protein which functions together with alg-1, a component of the miRNA loading complex, to modulate the processing and activity of specific miRNAs such as miR-58 and let-7 to regulate gene expression at the post-transcriptional level during embryonic, hypodermal and neuronal development. Promotes the lsy-6-mediated repression of cog-1 in uterine cells. In embryos, may play a role in the DNA damage response. This Caenorhabditis elegans protein is Heterogeneous nuclear ribonucleoprotein K homolog.